The primary structure comprises 89 residues: Small ribosomal subunit protein uS15 (89 aa).

It belongs to the universal ribosomal protein uS15 family. Part of the 30S ribosomal subunit. Forms a bridge to the 50S subunit in the 70S ribosome, contacting the 23S rRNA.

In terms of biological role, one of the primary rRNA binding proteins, it binds directly to 16S rRNA where it helps nucleate assembly of the platform of the 30S subunit by binding and bridging several RNA helices of the 16S rRNA. Functionally, forms an intersubunit bridge (bridge B4) with the 23S rRNA of the 50S subunit in the ribosome. This Bradyrhizobium sp. (strain ORS 278) protein is Small ribosomal subunit protein uS15.